Reading from the N-terminus, the 778-residue chain is Serine/threonine-protein kinase BRSK1 (778 aa).

A compositionally biased stretch (gly residues) spans methionine 1–serine 12. Positions methionine 1–glutamine 29 are disordered. The 252-residue stretch at tyrosine 34 to tyrosine 285 folds into the Protein kinase domain. Residues leucine 40–valine 48 and lysine 63 each bind ATP. Aspartate 156 serves as the catalytic Proton acceptor. Phosphothreonine; by LKB1 is present on threonine 189. The 43-residue stretch at glutamate 314–aspartate 356 folds into the UBA domain. Residues proline 362–aspartate 383 are compositionally biased toward basic and acidic residues. A disordered region spans residues proline 362–alanine 548. Phosphoserine is present on residues serine 399, serine 443, serine 447, and serine 450. Residues serine 430–proline 457 are compositionally biased toward low complexity. Omega-N-methylarginine is present on residues arginine 466, arginine 481, arginine 484, and arginine 498. Residues glutamine 491–serine 508 are compositionally biased toward pro residues. Serine 508 is subject to Phosphoserine. The span at proline 509 to glycine 533 shows a compositional bias: low complexity. Arginine 525 carries the post-translational modification Omega-N-methylarginine. Threonine 529 and threonine 535 each carry phosphothreonine. At arginine 550 the chain carries Omega-N-methylarginine. Phosphothreonine is present on threonine 583. Residues serine 586, serine 587, and serine 601 each carry the phosphoserine modification. A disordered region spans residues glutamine 719–proline 778.

This sequence belongs to the protein kinase superfamily. CAMK Ser/Thr protein kinase family. SNF1 subfamily. Mg(2+) serves as cofactor. Phosphorylated at Thr-189 by STK11/LKB1 in complex with STE20-related adapter-alpha (STRADA) pseudo kinase and CAB39. Not phosphorylated at Thr-189 by CaMKK2. In contrast, it is phosphorylated and activated by CaMKK1. May be inactivated via dephosphorylation of Thr-189 by PP2C. Widely expressed, with highest levels in brain and testis. Protein levels remain constant throughout the cell cycle.

It is found in the cytoplasm. The protein resides in the nucleus. It localises to the cytoskeleton. The protein localises to the microtubule organizing center. Its subcellular location is the centrosome. It is found in the synapse. The protein resides in the presynaptic active zone. It localises to the cytoplasmic vesicle. The protein localises to the secretory vesicle. Its subcellular location is the synaptic vesicle. It carries out the reaction L-seryl-[protein] + ATP = O-phospho-L-seryl-[protein] + ADP + H(+). The enzyme catalyses L-threonyl-[protein] + ATP = O-phospho-L-threonyl-[protein] + ADP + H(+). It catalyses the reaction L-seryl-[tau protein] + ATP = O-phospho-L-seryl-[tau protein] + ADP + H(+). The catalysed reaction is L-threonyl-[tau protein] + ATP = O-phospho-L-threonyl-[tau protein] + ADP + H(+). Activated by phosphorylation on Thr-189 by STK11/LKB1. In terms of biological role, serine/threonine-protein kinase that plays a key role in polarization of neurons and centrosome duplication. Phosphorylates CDC25B, CDC25C, MAPT/TAU, RIMS1, TUBG1, TUBG2 and WEE1. Following phosphorylation and activation by STK11/LKB1, acts as a key regulator of polarization of cortical neurons, probably by mediating phosphorylation of microtubule-associated proteins such as MAPT/TAU at 'Thr-529' and 'Ser-579'. Also regulates neuron polarization by mediating phosphorylation of WEE1 at 'Ser-642' in postmitotic neurons, leading to down-regulate WEE1 activity in polarized neurons. In neurons, localizes to synaptic vesicles and plays a role in neurotransmitter release, possibly by phosphorylating RIMS1. Also acts as a positive regulator of centrosome duplication by mediating phosphorylation of gamma-tubulin (TUBG1 and TUBG2) at 'Ser-131', leading to translocation of gamma-tubulin and its associated proteins to the centrosome. Involved in the UV-induced DNA damage checkpoint response, probably by inhibiting CDK1 activity through phosphorylation and activation of WEE1, and inhibition of CDC25B and CDC25C. This chain is Serine/threonine-protein kinase BRSK1 (BRSK1), found in Homo sapiens (Human).